Consider the following 389-residue polypeptide: tRNA-specific 2-thiouridylase MnmA (389 aa).

Residues 35–42 and Met-61 contribute to the ATP site; that span reads GMSGGVDS. Residues 121–123 are interaction with target base in tRNA; it reads NPD. Residue Cys-126 is the Nucleophile of the active site. Cysteines 126 and 223 form a disulfide. ATP is bound at residue Gly-151. Positions 173-175 are interaction with tRNA; sequence KDQ. Catalysis depends on Cys-223, which acts as the Cysteine persulfide intermediate. The tract at residues 335-336 is interaction with tRNA; sequence RY.

Belongs to the MnmA/TRMU family.

The protein resides in the cytoplasm. The catalysed reaction is S-sulfanyl-L-cysteinyl-[protein] + uridine(34) in tRNA + AH2 + ATP = 2-thiouridine(34) in tRNA + L-cysteinyl-[protein] + A + AMP + diphosphate + H(+). Its function is as follows. Catalyzes the 2-thiolation of uridine at the wobble position (U34) of tRNA, leading to the formation of s(2)U34. The chain is tRNA-specific 2-thiouridylase MnmA from Actinobacillus succinogenes (strain ATCC 55618 / DSM 22257 / CCUG 43843 / 130Z).